The primary structure comprises 103 residues: Small ribosomal subunit protein uS10 (103 aa).

It belongs to the universal ribosomal protein uS10 family. As to quaternary structure, part of the 30S ribosomal subunit.

Involved in the binding of tRNA to the ribosomes. The sequence is that of Small ribosomal subunit protein uS10 from Psychromonas ingrahamii (strain DSM 17664 / CCUG 51855 / 37).